A 455-amino-acid chain; its full sequence is Retinoic acid receptor beta (455 aa).

Positions 1 to 87 are modulating; the sequence is MTTSGHACPV…PLPPPRVYKP (87 aa). Residues 47 to 78 are disordered; that stretch reads HPPPSGCSTPSPATIETQSTSSEELVPSPPSP. Polar residues predominate over residues 53–66; that stretch reads CSTPSPATIETQST. S77 carries the phosphoserine modification. 2 NR C4-type zinc fingers span residues 88–108 and 124–148; these read CFVC…CEGC and CHRD…LQKC. The segment at residues 88–153 is a DNA-binding region (nuclear receptor); sequence CFVCQDKSSG…RLQKCFEVGM (66 aa). Residues 154–182 are hinge; sequence SKESVRNDRNKKKKETSKQECTESYEMTA. Residues 183–417 enclose the NR LBD domain; sequence ELDDLTEKIR…PLIQEMLENS (235 aa). The tract at residues 415-455 is disordered; sequence ENSEGHEPLTPSSSGNTAEHSPSISPSSVENSGVSQSPLVQ. The span at 424-434 shows a compositional bias: polar residues; it reads TPSSSGNTAEH. Over residues 435 to 455 the composition is skewed to low complexity; the sequence is SPSISPSSVENSGVSQSPLVQ.

The protein belongs to the nuclear hormone receptor family. NR1 subfamily. Homodimer. Heterodimer; with a RXR molecule. Binds DNA preferentially as a RAR/RXR heterodimer. Heterodimerizes (via NR LBD) with RXRA. Interacts weakly with NCOR2. As to expression, expressed in aortic endothelial cells (at protein level).

The protein localises to the nucleus. Its subcellular location is the cytoplasm. Receptor for retinoic acid. Retinoic acid receptors bind as heterodimers to their target response elements in response to their ligands, all-trans or 9-cis retinoic acid, and regulate gene expression in various biological processes. The RXR/RAR heterodimers bind to the retinoic acid response elements (RARE) composed of tandem 5'-AGGTCA-3' sites known as DR1-DR5. In the absence or presence of hormone ligand, acts mainly as an activator of gene expression due to weak binding to corepressors. The RXRA/RARB heterodimer can act as a repressor on the DR1 element and as an activator on the DR5 element. In concert with RARG, required for skeletal growth, matrix homeostasis and growth plate function. This chain is Retinoic acid receptor beta (RARB), found in Homo sapiens (Human).